Reading from the N-terminus, the 271-residue chain is 3-methyl-2-oxobutanoate hydroxymethyltransferase 1 (271 aa).

2 residues coordinate Mg(2+): Asp-53 and Asp-92. Residues 53 to 54 (DS), Asp-92, and Lys-120 each bind 3-methyl-2-oxobutanoate. A Mg(2+)-binding site is contributed by Glu-122. Residue Glu-189 is the Proton acceptor of the active site.

It belongs to the PanB family. Homodecamer; pentamer of dimers. The cofactor is Mg(2+).

Its subcellular location is the cytoplasm. It carries out the reaction 3-methyl-2-oxobutanoate + (6R)-5,10-methylene-5,6,7,8-tetrahydrofolate + H2O = 2-dehydropantoate + (6S)-5,6,7,8-tetrahydrofolate. The protein operates within cofactor biosynthesis; (R)-pantothenate biosynthesis; (R)-pantoate from 3-methyl-2-oxobutanoate: step 1/2. Functionally, catalyzes the reversible reaction in which hydroxymethyl group from 5,10-methylenetetrahydrofolate is transferred onto alpha-ketoisovalerate to form ketopantoate. This is 3-methyl-2-oxobutanoate hydroxymethyltransferase 1 from Burkholderia ambifaria (strain ATCC BAA-244 / DSM 16087 / CCUG 44356 / LMG 19182 / AMMD) (Burkholderia cepacia (strain AMMD)).